The following is a 207-amino-acid chain: Large ribosomal subunit protein uL4 (207 aa).

Residues 49–78 (HAVKNRSAVSGGGRKPWRQKGTGRARQGSI) are disordered.

Belongs to the universal ribosomal protein uL4 family. In terms of assembly, part of the 50S ribosomal subunit.

In terms of biological role, one of the primary rRNA binding proteins, this protein initially binds near the 5'-end of the 23S rRNA. It is important during the early stages of 50S assembly. It makes multiple contacts with different domains of the 23S rRNA in the assembled 50S subunit and ribosome. Forms part of the polypeptide exit tunnel. The polypeptide is Large ribosomal subunit protein uL4 (Streptococcus pneumoniae serotype 2 (strain D39 / NCTC 7466)).